A 217-amino-acid polypeptide reads, in one-letter code: MGQKVHPIGMRVGVIRDWDAKWYAEKEYSDYLHEDLAIRQLIQTKLADASVSLIETERAINKVIVTLHTAKPGMVIGKSGANVDALRAELNKLTGKQVHINIVEIKKPDLDAHLVGEGIAKQLEARIAFRRAQKQAIQRAMRAGAKGIKTQVSGRLNGADIARAEGYSEGTVPLHTLRADIDYAWEEADTTYGKLGVKVWIYRGEVLPTKKSVKGEK.

One can recognise a KH type-2 domain in the interval 38-106 (IRQLIQTKLA…QVHINIVEIK (69 aa)).

Belongs to the universal ribosomal protein uS3 family. In terms of assembly, part of the 30S ribosomal subunit. Forms a tight complex with proteins S10 and S14.

In terms of biological role, binds the lower part of the 30S subunit head. Binds mRNA in the 70S ribosome, positioning it for translation. The chain is Small ribosomal subunit protein uS3 from Lactococcus lactis subsp. lactis (strain IL1403) (Streptococcus lactis).